The primary structure comprises 273 residues: Diaminopimelate epimerase (273 aa).

Residues asparagine 11 and asparagine 60 each coordinate substrate. Cysteine 69 acts as the Proton donor in catalysis. Substrate is bound by residues 70–71 (GN), asparagine 181, and 199–200 (ER). The Proton acceptor role is filled by cysteine 209. Substrate is bound at residue 210–211 (GT).

The protein belongs to the diaminopimelate epimerase family. As to quaternary structure, homodimer.

The protein resides in the cytoplasm. The enzyme catalyses (2S,6S)-2,6-diaminopimelate = meso-2,6-diaminopimelate. Its pathway is amino-acid biosynthesis; L-lysine biosynthesis via DAP pathway; DL-2,6-diaminopimelate from LL-2,6-diaminopimelate: step 1/1. Its function is as follows. Catalyzes the stereoinversion of LL-2,6-diaminopimelate (L,L-DAP) to meso-diaminopimelate (meso-DAP), a precursor of L-lysine and an essential component of the bacterial peptidoglycan. This chain is Diaminopimelate epimerase, found in Helicobacter pylori (strain HPAG1).